The chain runs to 264 residues: Stage IV sporulation protein FA (264 aa).

Residues 1–10 show a composition bias toward basic and acidic residues; it reads MSHRADEIRK. The disordered stretch occupies residues 1–37; it reads MSHRADEIRKRLEKRRKQLSGSKRFSTQTVSEKQKPP. Residues 1–72 are Mother cell cytoplasmic-facing; sequence MSHRADEIRK…GKHPLVKTDS (72 aa). Positions 19–31 are enriched in polar residues; it reads LSGSKRFSTQTVS. The chain crosses the membrane as a helical span at residues 73–90; sequence IILKCLLSACLVLVSAIA. The Forespore intermembrane space segment spans residues 91-264; that stretch reads YKTNIGPVSQ…IDPIQVISFE (174 aa).

As to quaternary structure, forms a complex with BofA and SpoIVFB localized in the mother-cell membrane surrounding the forespore. Post-translationally, may be degraded by FtsH. It is stabilized by an ftsH disruption mutant, and in a probably independent fashion, by overexpression of BofA.

Its subcellular location is the forespore outer membrane. Functionally, implicated in the coupling of mother cell to forespore gene expression. Required for spore formation at 37 degrees Celsius, but not at 30 degrees Celsius. SpoIVFA plays a central role in both maintaining the SpoIVFA/BofA/SpoIVFB complex and anchoring it to the outer forespore membrane. SpoIVFA brings BofA into close proximity to SpoIVFB, allowing BofA to inhibit SpoIVFB. Increased accumulation of SpoIVFA seems to inhibit the activity of SpoIVFB and thus regulates the activation of sigma-K. The protein is Stage IV sporulation protein FA (spoIVFA) of Bacillus subtilis (strain 168).